Here is a 587-residue protein sequence, read N- to C-terminus: Integrator complex subunit 14 (587 aa).

The 111-residue stretch at 3–113 (TLIALDASLS…NILQVVVFTD (111 aa)) folds into the VWFA domain. Disordered stretches follow at residues 190-211 (KSSD…KSEL) and 304-331 (REKS…DTSN).

The protein belongs to the Integrator subunit 14 family. As to quaternary structure, belongs to the multiprotein complex Integrator, at least composed of IntS1, IntS2, IntS3, IntS4, omd/IntS5, IntS6, defl/IntS7, IntS8, IntS9, IntS10, IntS11, IntS12, asun/IntS13, IntS14 and IntS15. The core complex associates with protein phosphatase 2A subunits mts/PP2A and Pp2A-29B, to form the Integrator-PP2A (INTAC) complex.

Its subcellular location is the nucleus. Component of the integrator complex, a multiprotein complex that terminates RNA polymerase II (Pol II) transcription in the promoter-proximal region of genes. The integrator complex provides a quality checkpoint during transcription elongation by driving premature transcription termination of transcripts that are unfavorably configured for transcriptional elongation: the complex terminates transcription by (1) catalyzing dephosphorylation of the C-terminal domain (CTD) of Pol II subunit Polr2A/Rbp1 and Spt5, and (2) degrading the exiting nascent RNA transcript via endonuclease activity. The integrator complex is also involved in the 3'-end processing of the U7 snRNA, and also the spliceosomal snRNAs U1, U2, U4 and U5. The chain is Integrator complex subunit 14 from Drosophila melanogaster (Fruit fly).